The sequence spans 438 residues: Aspartate--tRNA(Asp/Asn) ligase (438 aa).

An L-aspartate-binding site is contributed by E176. Residues 198–201 are aspartate; sequence QLYK. Residue R220 participates in L-aspartate binding. ATP is bound by residues 220–222, 228–230, and E361; these read RAE and RHL. Mg(2+) contacts are provided by E361 and S364. Residues S364 and R368 each coordinate L-aspartate. 409–412 serves as a coordination point for ATP; the sequence is GADR.

This sequence belongs to the class-II aminoacyl-tRNA synthetase family. Type 2 subfamily. Homodimer. Mg(2+) serves as cofactor.

The protein localises to the cytoplasm. It carries out the reaction tRNA(Asx) + L-aspartate + ATP = L-aspartyl-tRNA(Asx) + AMP + diphosphate. Functionally, aspartyl-tRNA synthetase with relaxed tRNA specificity since it is able to aspartylate not only its cognate tRNA(Asp) but also tRNA(Asn). Reaction proceeds in two steps: L-aspartate is first activated by ATP to form Asp-AMP and then transferred to the acceptor end of tRNA(Asp/Asn). The protein is Aspartate--tRNA(Asp/Asn) ligase of Methanococcus maripaludis (strain C7 / ATCC BAA-1331).